Reading from the N-terminus, the 635-residue chain is Kelch-like protein 31 (635 aa).

Residues cysteine 74–leucine 138 form the BTB domain. The region spanning cysteine 173–glutamine 274 is the BACK domain. Kelch repeat units lie at residues valine 318 to glycine 366, phenylalanine 367 to glycine 420, leucine 421 to glycine 467, isoleucine 469 to aspartate 514, alanine 516 to asparagine 566, and lysine 567 to isoleucine 615.

As to expression, strongly expressed in fast skeletal muscle, and weakly in heart. Not expressed in other tissues.

The polypeptide is Kelch-like protein 31 (klhl31) (Danio rerio (Zebrafish)).